A 458-amino-acid polypeptide reads, in one-letter code: UPF0210 protein MJ1665 (458 aa).

Belongs to the UPF0210 family.

This Methanocaldococcus jannaschii (strain ATCC 43067 / DSM 2661 / JAL-1 / JCM 10045 / NBRC 100440) (Methanococcus jannaschii) protein is UPF0210 protein MJ1665.